The primary structure comprises 177 residues: R-phycoerythrin beta chain (177 aa).

Positions 35 and 39 each coordinate (2R,3E)-phycoerythrobilin. 3 residues coordinate phycourobilin: cysteine 50, aspartate 54, and cysteine 61. (2R,3E)-phycoerythrobilin contacts are provided by residues asparagine 72, 77-78 (RR), cysteine 82, and 84-85 (RD). Asparagine 72 is subject to N4-methylasparagine. A phycourobilin-binding site is contributed by 147–148 (SG). (2R,3E)-phycoerythrobilin is bound at residue cysteine 158.

It belongs to the phycobiliprotein family. In terms of assembly, heterododecamer of 6 alpha and 6 beta chains. The basic functional unit of phycobiliproteins is a ring-shaped hexamer formed from two back-to-back trimers contacting via the alpha chain subunits. The trimers are composed of alpha/beta subunit heterodimers arranged around a three-fold axis of symmetry. The phycoerythrins also contain a gamma subunit which is located in the center of the hexamer. In terms of processing, contains two covalently linked phycoerythrobilin chromophores and one covalently linked phycourobilin chromophore.

It is found in the plastid. Its subcellular location is the chloroplast thylakoid membrane. In terms of biological role, light-harvesting photosynthetic tetrapyrrole chromophore-protein from the phycobiliprotein complex. This Griffithsia monilis (Red alga) protein is R-phycoerythrin beta chain (cpeB).